The primary structure comprises 236 residues: 4-hydroxy-tetrahydrodipicolinate reductase (236 aa).

NAD(+)-binding positions include 11–16, 92–94, and 116–119; these read GASGRM, GTT, and GSNF. His148 (proton donor/acceptor) is an active-site residue. His149 serves as a coordination point for (S)-2,3,4,5-tetrahydrodipicolinate. The active-site Proton donor is the Lys152. 158–159 contributes to the (S)-2,3,4,5-tetrahydrodipicolinate binding site; the sequence is GS.

The protein belongs to the DapB family.

The protein localises to the cytoplasm. It carries out the reaction (S)-2,3,4,5-tetrahydrodipicolinate + NAD(+) + H2O = (2S,4S)-4-hydroxy-2,3,4,5-tetrahydrodipicolinate + NADH + H(+). The enzyme catalyses (S)-2,3,4,5-tetrahydrodipicolinate + NADP(+) + H2O = (2S,4S)-4-hydroxy-2,3,4,5-tetrahydrodipicolinate + NADPH + H(+). Its pathway is amino-acid biosynthesis; L-lysine biosynthesis via DAP pathway; (S)-tetrahydrodipicolinate from L-aspartate: step 4/4. Functionally, catalyzes the conversion of 4-hydroxy-tetrahydrodipicolinate (HTPA) to tetrahydrodipicolinate. This chain is 4-hydroxy-tetrahydrodipicolinate reductase, found in Xylella fastidiosa (strain M23).